Here is a 61-residue protein sequence, read N- to C-terminus: MAKKSQIVKWLKPKKYKVREYNRCRICGRPRGYIRKFGLCRLCFRELALKGELPGVRKASW.

The Zn(2+) site is built by C24, C27, C40, and C43.

Belongs to the universal ribosomal protein uS14 family. Zinc-binding uS14 subfamily. Part of the 30S ribosomal subunit. Contacts proteins S3 and S10. The cofactor is Zn(2+).

In terms of biological role, binds 16S rRNA, required for the assembly of 30S particles and may also be responsible for determining the conformation of the 16S rRNA at the A site. This chain is Small ribosomal subunit protein uS14, found in Dictyoglomus thermophilum (strain ATCC 35947 / DSM 3960 / H-6-12).